A 157-amino-acid chain; its full sequence is Phosphopantetheine adenylyltransferase (157 aa).

S8 lines the substrate pocket. Residues 8–9 (SF) and H16 each bind ATP. Residues K40, T72, and R86 each coordinate substrate. ATP-binding positions include 87-89 (GLR), E97, and 122-128 (HSFLSSS).

It belongs to the bacterial CoaD family. As to quaternary structure, homohexamer. Requires Mg(2+) as cofactor.

Its subcellular location is the cytoplasm. The enzyme catalyses (R)-4'-phosphopantetheine + ATP + H(+) = 3'-dephospho-CoA + diphosphate. Its pathway is cofactor biosynthesis; coenzyme A biosynthesis; CoA from (R)-pantothenate: step 4/5. Functionally, reversibly transfers an adenylyl group from ATP to 4'-phosphopantetheine, yielding dephospho-CoA (dPCoA) and pyrophosphate. This is Phosphopantetheine adenylyltransferase from Prochlorococcus marinus (strain MIT 9303).